A 455-amino-acid chain; its full sequence is Bifunctional protein GlmU (455 aa).

A pyrophosphorylase region spans residues Met-1–Arg-227. Residues Leu-8–Gly-11, Lys-22, Gln-73, Gly-78–Thr-79, Tyr-100–Asp-102, Gly-137, Glu-152, Asn-167, and Asn-225 contribute to the UDP-N-acetyl-alpha-D-glucosamine site. Asp-102 is a binding site for Mg(2+). Position 225 (Asn-225) interacts with Mg(2+). A linker region spans residues Trp-228–Ala-248. Positions Gly-249–Glu-455 are N-acetyltransferase. 2 residues coordinate UDP-N-acetyl-alpha-D-glucosamine: Arg-332 and Lys-350. Catalysis depends on His-362, which acts as the Proton acceptor. Residues Tyr-365 and Asn-376 each coordinate UDP-N-acetyl-alpha-D-glucosamine. Residues Ala-379, Asn-385–Tyr-386, Ser-404, Ala-422, and Arg-439 each bind acetyl-CoA.

In the N-terminal section; belongs to the N-acetylglucosamine-1-phosphate uridyltransferase family. This sequence in the C-terminal section; belongs to the transferase hexapeptide repeat family. As to quaternary structure, homotrimer. Mg(2+) serves as cofactor.

It localises to the cytoplasm. It carries out the reaction alpha-D-glucosamine 1-phosphate + acetyl-CoA = N-acetyl-alpha-D-glucosamine 1-phosphate + CoA + H(+). It catalyses the reaction N-acetyl-alpha-D-glucosamine 1-phosphate + UTP + H(+) = UDP-N-acetyl-alpha-D-glucosamine + diphosphate. The protein operates within nucleotide-sugar biosynthesis; UDP-N-acetyl-alpha-D-glucosamine biosynthesis; N-acetyl-alpha-D-glucosamine 1-phosphate from alpha-D-glucosamine 6-phosphate (route II): step 2/2. Its pathway is nucleotide-sugar biosynthesis; UDP-N-acetyl-alpha-D-glucosamine biosynthesis; UDP-N-acetyl-alpha-D-glucosamine from N-acetyl-alpha-D-glucosamine 1-phosphate: step 1/1. It participates in bacterial outer membrane biogenesis; LPS lipid A biosynthesis. Catalyzes the last two sequential reactions in the de novo biosynthetic pathway for UDP-N-acetylglucosamine (UDP-GlcNAc). The C-terminal domain catalyzes the transfer of acetyl group from acetyl coenzyme A to glucosamine-1-phosphate (GlcN-1-P) to produce N-acetylglucosamine-1-phosphate (GlcNAc-1-P), which is converted into UDP-GlcNAc by the transfer of uridine 5-monophosphate (from uridine 5-triphosphate), a reaction catalyzed by the N-terminal domain. The protein is Bifunctional protein GlmU of Coxiella burnetii (strain CbuK_Q154) (Coxiella burnetii (strain Q154)).